Reading from the N-terminus, the 447-residue chain is Neuraminidase (447 aa).

Over 1–6 the chain is Intravirion; that stretch reads MNPNQK. The chain crosses the membrane as a helical span at residues 7-27; the sequence is IITIGSICMGIGIISLILQIG. The tract at residues 11–33 is involved in apical transport and lipid raft association; that stretch reads GSICMGIGIISLILQIGNIISMW. At 28-447 the chain is on the virion surface side; it reads NIISMWVSHS…GAELPFTIDK (420 aa). Positions 36-68 are hypervariable stalk region; that stretch reads HSIQTENQNHHEACNPSIAGQDAASVALAGNSS. Residue N66 is glycosylated (N-linked (GlcNAc...) asparagine; by host). Positions 69-447 are head of neuraminidase; sequence LCPISGWAIY…GAELPFTIDK (379 aa). Disulfide bonds link C70/C395, C102/C107, C162/C209, C211/C216, C257/C270, C259/C268, C296/C313, and C399/C424. Position 96 (R96) interacts with substrate. N-linked (GlcNAc...) asparagine; by host glycosylation is present at N124. The active-site Proton donor/acceptor is the D129. R130 is a substrate binding site. N-linked (GlcNAc...) asparagine; by host glycosylation occurs at N213. Substrate is bound at residue 255–256; it reads EE. Position 271 (R271) interacts with substrate. Positions 272, 276, and 302 each coordinate Ca(2+). R346 contributes to the substrate binding site. The active-site Nucleophile is the Y380.

Belongs to the glycosyl hydrolase 34 family. Homotetramer. Ca(2+) is required as a cofactor. In terms of processing, N-glycosylated.

It is found in the virion membrane. The protein resides in the host apical cell membrane. It catalyses the reaction Hydrolysis of alpha-(2-&gt;3)-, alpha-(2-&gt;6)-, alpha-(2-&gt;8)- glycosidic linkages of terminal sialic acid residues in oligosaccharides, glycoproteins, glycolipids, colominic acid and synthetic substrates.. Its activity is regulated as follows. Inhibited by the neuraminidase inhibitors zanamivir (Relenza) and oseltamivir (Tamiflu). These drugs interfere with the release of progeny virus from infected cells and are effective against all influenza strains. Resistance to neuraminidase inhibitors is quite rare. Functionally, catalyzes the removal of terminal sialic acid residues from viral and cellular glycoconjugates. Cleaves off the terminal sialic acids on the glycosylated HA during virus budding to facilitate virus release. Additionally helps virus spread through the circulation by further removing sialic acids from the cell surface. These cleavages prevent self-aggregation and ensure the efficient spread of the progeny virus from cell to cell. Otherwise, infection would be limited to one round of replication. Described as a receptor-destroying enzyme because it cleaves a terminal sialic acid from the cellular receptors. May facilitate viral invasion of the upper airways by cleaving the sialic acid moieties on the mucin of the airway epithelial cells. Likely to plays a role in the budding process through its association with lipid rafts during intracellular transport. May additionally display a raft-association independent effect on budding. Plays a role in the determination of host range restriction on replication and virulence. Sialidase activity in late endosome/lysosome traffic seems to enhance virus replication. The protein is Neuraminidase of Aves.